The sequence spans 130 residues: Protein ApaG (130 aa).

The 125-residue stretch at 3–127 (SAVTQDIQIT…FSLDSPFVRR (125 aa)) folds into the ApaG domain.

This chain is Protein ApaG, found in Methylocella silvestris (strain DSM 15510 / CIP 108128 / LMG 27833 / NCIMB 13906 / BL2).